Here is a 178-residue protein sequence, read N- to C-terminus: Large ribosomal subunit protein uL5 (178 aa).

The protein belongs to the universal ribosomal protein uL5 family. In terms of assembly, part of the 50S ribosomal subunit; part of the 5S rRNA/L5/L18/L25 subcomplex. Contacts the 5S rRNA and the P site tRNA. Forms a bridge to the 30S subunit in the 70S ribosome.

In terms of biological role, this is one of the proteins that bind and probably mediate the attachment of the 5S RNA into the large ribosomal subunit, where it forms part of the central protuberance. In the 70S ribosome it contacts protein S13 of the 30S subunit (bridge B1b), connecting the 2 subunits; this bridge is implicated in subunit movement. Contacts the P site tRNA; the 5S rRNA and some of its associated proteins might help stabilize positioning of ribosome-bound tRNAs. The protein is Large ribosomal subunit protein uL5 of Psychrobacter arcticus (strain DSM 17307 / VKM B-2377 / 273-4).